The primary structure comprises 515 residues: Histidine ammonia-lyase (515 aa).

The 5-imidazolinone (Ala-Gly) cross-link spans 145-147 (ASG). Residue Ser-146 is modified to 2,3-didehydroalanine (Ser).

It belongs to the PAL/histidase family. Post-translationally, contains an active site 4-methylidene-imidazol-5-one (MIO), which is formed autocatalytically by cyclization and dehydration of residues Ala-Ser-Gly.

The protein localises to the cytoplasm. It catalyses the reaction L-histidine = trans-urocanate + NH4(+). It participates in amino-acid degradation; L-histidine degradation into L-glutamate; N-formimidoyl-L-glutamate from L-histidine: step 1/3. The polypeptide is Histidine ammonia-lyase (Gluconobacter oxydans (strain 621H) (Gluconobacter suboxydans)).